A 247-amino-acid chain; its full sequence is Probable transcriptional regulatory protein BHWA1_01533 (247 aa).

Residues 1 to 22 (MSGHSKWASIKHKKAANDSKKG) are disordered.

This sequence belongs to the TACO1 family.

It is found in the cytoplasm. The chain is Probable transcriptional regulatory protein BHWA1_01533 from Brachyspira hyodysenteriae (strain ATCC 49526 / WA1).